We begin with the raw amino-acid sequence, 562 residues long: Sensor histidine kinase MtrB (562 aa).

Helical transmembrane passes span 42-62 (VVALTFGLSLAVILALGFVLT) and 213-233 (GTMATGGMVLLVLLSGIALLV). One can recognise an HAMP domain in the interval 235-287 (RQVVVPVRSASRIAERFAEGHLSERMPVRGEDDMARLAVSFNDMAESLSRQIT). The Histidine kinase domain maps to 302–519 (DVSHELRTPL…CFRLTLPLVR (218 aa)). The disordered stretch occupies residues 526–562 (SPLPMKPILQPSPQASTAGQQHGTQRQRLREHAERSR). A compositionally biased stretch (polar residues) spans 536–551 (PSPQASTAGQQHGTQR). Over residues 553 to 562 (RLREHAERSR) the composition is skewed to basic and acidic residues.

Its subcellular location is the cell membrane. The enzyme catalyses ATP + protein L-histidine = ADP + protein N-phospho-L-histidine.. Member of the two-component regulatory system MtrA/MtrB. Seems to function as a membrane-associated protein kinase that phosphorylates MtrA in response to environmental signals. In Mycobacterium leprae (strain TN), this protein is Sensor histidine kinase MtrB (mtrB).